The following is a 513-amino-acid chain: Probable WRKY transcription factor 3 (513 aa).

Residues 1 to 11 (MAEKEEKEPSK) are compositionally biased toward basic and acidic residues. Disordered stretches follow at residues 1–26 (MAEKEEKEPSKLKSSTGVSRPTISLP), 175–281 (NVHM…PACP), and 297–394 (IIYK…VASS). A compositionally biased stretch (low complexity) spans 179–201 (QQSQQSEYPSSTQQQQQQQQQAS). Polar residues predominate over residues 202 to 228 (LTEIPSFSSAPRSQIRASVQETSQGQR). Over residues 229–240 (ETSEISVFEHRS) the composition is skewed to basic and acidic residues. The segment at residues 244–308 (NADKPADDGY…YKGQHNHELP (65 aa)) is a DNA-binding region (WRKY 1). Polar residues-rich tracts occupy residues 311-335 (RGNNNGSCKSSDIANQFQTSNSSLN) and 343-355 (TSQVTTTEQMSEA). A compositionally biased stretch (basic and acidic residues) spans 368–387 (VGERHEDEPDPKRRNTEVRV). The WRKY 2 DNA-binding region spans 409–474 (SEVDLLDDGY…YEGKHNHDVP (66 aa)).

In terms of tissue distribution, in young, mature and senescent leaves.

It localises to the nucleus. Its function is as follows. Transcription factor. Interacts specifically with the W box (5'-(T)TGAC[CT]-3'), a frequently occurring elicitor-responsive cis-acting element. The chain is Probable WRKY transcription factor 3 (WRKY3) from Arabidopsis thaliana (Mouse-ear cress).